Consider the following 488-residue polypeptide: UDP-N-acetylmuramate--L-alanine ligase (488 aa).

Position 126–132 (glycine 126–threonine 132) interacts with ATP.

This sequence belongs to the MurCDEF family.

It localises to the cytoplasm. It catalyses the reaction UDP-N-acetyl-alpha-D-muramate + L-alanine + ATP = UDP-N-acetyl-alpha-D-muramoyl-L-alanine + ADP + phosphate + H(+). Its pathway is cell wall biogenesis; peptidoglycan biosynthesis. Its function is as follows. Cell wall formation. The chain is UDP-N-acetylmuramate--L-alanine ligase from Cronobacter sakazakii (strain ATCC BAA-894) (Enterobacter sakazakii).